The primary structure comprises 95 residues: Cytosolic calcium-binding protein 3 (95 aa).

6 consecutive repeat copies span residues 30–35, 39–43, 54–59, 67–71, 75–79, and 90–94. Residues 30–94 form a 6 X 5 AA approximate repeats of V-E-E-K-K region; that stretch reads VEDAEKTNED…AEEVAVEKAK (65 aa). The interval 54 to 95 is disordered; the sequence is VEEEKKAEEVTETPEEKKTEALEEKQTEVAAAEEVAVEKAKE. A compositionally biased stretch (basic and acidic residues) spans 55–80; the sequence is EEEKKAEEVTETPEEKKTEALEEKQT.

Low levels in roots (e.g. in cambium) and barely expressed in stems, shoots, flowers, siliques and leaves.

Its subcellular location is the cytoplasm. It localises to the cytosol. Functionally, binds calcium Ca(2+) and may act as a signal mediator to buffer Ca(2+). The polypeptide is Cytosolic calcium-binding protein 3 (Arabidopsis thaliana (Mouse-ear cress)).